A 368-amino-acid chain; its full sequence is tRNA(Met) cytidine acetate ligase (368 aa).

ATP contacts are provided by residues Ile-7 to Leu-20, Gly-96, Asn-152, and Arg-175.

It belongs to the TmcAL family.

It is found in the cytoplasm. It catalyses the reaction cytidine(34) in elongator tRNA(Met) + acetate + ATP = N(4)-acetylcytidine(34) in elongator tRNA(Met) + AMP + diphosphate. Functionally, catalyzes the formation of N(4)-acetylcytidine (ac(4)C) at the wobble position of elongator tRNA(Met), using acetate and ATP as substrates. First activates an acetate ion to form acetyladenylate (Ac-AMP) and then transfers the acetyl group to tRNA to form ac(4)C34. This is tRNA(Met) cytidine acetate ligase from Streptococcus pyogenes serotype M1.